Here is a 740-residue protein sequence, read N- to C-terminus: Alpha-1,6-mannosylglycoprotein 6-beta-N-acetylglucosaminyltransferase A (740 aa).

At 1-13 (MAFFSPWKLSSQK) the chain is on the cytoplasmic side. The helical; Signal-anchor for type II membrane protein transmembrane segment at 14–30 (LGFFLVTFGFIWGMMLL) threads the bilayer. Over 31–740 (HFTIQQRTQP…GQVALCKDCL (710 aa)) the chain is Lumenal. N-linked (GlcNAc...) asparagine glycans are attached at residues Asn109, Asn114, and Asn117. Disulfide bonds link Cys144-Cys182, Cys155-Cys195, Cys171-Cys337, Cys371-Cys625, Cys648-Cys723, Cys652-Cys725, Cys659-Cys712, Cys680-Cys701, and Cys736-Cys739. The interval 212–740 (NSLAEIRTDF…GQVALCKDCL (529 aa)) is sufficient for catalytic activity. Asn333 carries N-linked (GlcNAc...) asparagine glycosylation. Residue 377–378 (DS) coordinates substrate. N-linked (GlcNAc...) asparagine glycosylation is found at Asn432 and Asn446. A UDP-N-acetyl-alpha-D-glucosamine-binding site is contributed by Glu525. Lys553 serves as a coordination point for substrate.

This sequence belongs to the glycosyltransferase 18 family. N-glycosylated. Post-translationally, a secreted form is released from the membrane after cleavage by gamma-secretase. Detected in kidney (at protein level). Detected in kidney.

It localises to the golgi apparatus membrane. The protein localises to the secreted. It carries out the reaction N(4)-{beta-D-GlcNAc-(1-&gt;2)-[beta-D-GlcNAc-(1-&gt;4)]-alpha-D-Man-(1-&gt;3)-[beta-D-GlcNAc-(1-&gt;2)-alpha-D-Man-(1-&gt;6)]-beta-D-Man-(1-&gt;4)-beta-D-GlcNAc-(1-&gt;4)-beta-D-GlcNAc}-L-asparaginyl-[protein] + UDP-N-acetyl-alpha-D-glucosamine = N(4)-{beta-D-GlcNAc-(1-&gt;2)-[beta-D-GlcNAc-(1-&gt;4)]-alpha-D-Man-(1-&gt;3)-[beta-D-GlcNAc-(1-&gt;2)-[beta-D-GlcNAc-(1-&gt;6)]-alpha-D-Man-(1-&gt;6)]-beta-D-Man-(1-&gt;4)-beta-D-GlcNAc-(1-&gt;4)-beta-D-GlcNAc}-L-asparaginyl-[protein] + UDP + H(+). Its pathway is protein modification; protein glycosylation. Catalyzes the addition of N-acetylglucosamine (GlcNAc) in beta 1-6 linkage to the alpha-linked mannose of biantennary N-linked oligosaccharides. Catalyzes an important step in the biosynthesis of branched, complex-type N-glycans, such as those found on EGFR, TGFR (TGF-beta receptor) and CDH2. Via its role in the biosynthesis of complex N-glycans, plays an important role in the activation of cellular signaling pathways, reorganization of the actin cytoskeleton, cell-cell adhesion and cell migration. MGAT5-dependent EGFR N-glycosylation enhances the interaction between EGFR and LGALS3 and thereby prevents rapid EGFR endocytosis and prolongs EGFR signaling. Required for efficient interaction between TGFB1 and its receptor. Enhances activation of intracellular signaling pathways by several types of growth factors, including FGF2, PDGF, IGF, TGFB1 and EGF. MGAT5-dependent CDH2 N-glycosylation inhibits CDH2-mediated homotypic cell-cell adhesion and contributes to the regulation of downstream signaling pathways. Promotes cell migration. Contributes to the regulation of the inflammatory response. MGAT5-dependent TCR N-glycosylation enhances the interaction between TCR and LGALS3, limits agonist-induced TCR clustering, and thereby dampens TCR-mediated responses to antigens. Required for normal leukocyte evasation and accumulation at sites of inflammation. Inhibits attachment of monocytes to the vascular endothelium and subsequent monocyte diapedesis. Its function is as follows. Promotes proliferation of umbilical vein endothelial cells and angiogenesis, at least in part by promoting the release of the growth factor FGF2 from the extracellular matrix. The polypeptide is Alpha-1,6-mannosylglycoprotein 6-beta-N-acetylglucosaminyltransferase A (Mgat5) (Rattus norvegicus (Rat)).